The chain runs to 422 residues: Serine--tRNA ligase (422 aa).

229-231 (TAE) contacts L-serine. An ATP-binding site is contributed by 260-262 (RAE). Glutamate 283 is an L-serine binding site. 347 to 350 (EISS) is an ATP binding site. Serine 383 lines the L-serine pocket.

This sequence belongs to the class-II aminoacyl-tRNA synthetase family. Type-1 seryl-tRNA synthetase subfamily. As to quaternary structure, homodimer. The tRNA molecule binds across the dimer.

Its subcellular location is the cytoplasm. It catalyses the reaction tRNA(Ser) + L-serine + ATP = L-seryl-tRNA(Ser) + AMP + diphosphate + H(+). The catalysed reaction is tRNA(Sec) + L-serine + ATP = L-seryl-tRNA(Sec) + AMP + diphosphate + H(+). Its pathway is aminoacyl-tRNA biosynthesis; selenocysteinyl-tRNA(Sec) biosynthesis; L-seryl-tRNA(Sec) from L-serine and tRNA(Sec): step 1/1. Functionally, catalyzes the attachment of serine to tRNA(Ser). Is also able to aminoacylate tRNA(Sec) with serine, to form the misacylated tRNA L-seryl-tRNA(Sec), which will be further converted into selenocysteinyl-tRNA(Sec). This is Serine--tRNA ligase from Halothermothrix orenii (strain H 168 / OCM 544 / DSM 9562).